The chain runs to 125 residues: Small ribosomal subunit protein uS13 (125 aa).

The tract at residues 91 to 125 is disordered; that stretch reads HRRSLPVRGQNTQTNARTRKGKRKTVAGKKKAARK. The segment covering 107–125 has biased composition (basic residues); it reads RTRKGKRKTVAGKKKAARK.

The protein belongs to the universal ribosomal protein uS13 family. As to quaternary structure, part of the 30S ribosomal subunit. Forms a loose heterodimer with protein S19. Forms two bridges to the 50S subunit in the 70S ribosome.

Its function is as follows. Located at the top of the head of the 30S subunit, it contacts several helices of the 16S rRNA. In the 70S ribosome it contacts the 23S rRNA (bridge B1a) and protein L5 of the 50S subunit (bridge B1b), connecting the 2 subunits; these bridges are implicated in subunit movement. Contacts the tRNAs in the A and P-sites. This Chlorobium phaeovibrioides (strain DSM 265 / 1930) (Prosthecochloris vibrioformis (strain DSM 265)) protein is Small ribosomal subunit protein uS13.